The following is a 391-amino-acid chain: Protein CapJ (391 aa).

Its pathway is capsule biogenesis; capsule polysaccharide biosynthesis. In terms of biological role, required for the biosynthesis of type 1 capsular polysaccharide. This is Protein CapJ (capJ) from Staphylococcus aureus.